The chain runs to 1269 residues: Protein strawberry notch homolog 1 (1269 aa).

The interval 21–47 (NDLFDVDGGDAGLATPTPPSVQQQQPP) is disordered. Residue Lys113 is modified to N6-acetyllysine. Phosphoserine occurs at positions 126 and 178. Lys377 carries the N6-acetyllysine modification. Residues 652 to 725 (PSNNSSPRDS…SLITSQDAVE (74 aa)) form a disordered region. Ser656, Ser657, and Ser661 each carry phosphoserine. Residues 679–693 (SGSESDVSDNEESDY) are compositionally biased toward acidic residues. Residues Ser700 and Ser701 each carry the phosphoserine modification. Residues 719–746 (TSQDAVERAQQMKKDLLDKLEKLAEDLP) adopt a coiled-coil conformation. Position 1098 is an N6-acetyllysine (Lys1098). Ser1262 bears the Phosphoserine mark.

It belongs to the SBNO family.

The protein resides in the nucleus. In terms of biological role, plays a crucial role in the regulation of neural stem cells (NSCs) proliferation. Enhances the phosphorylation of GSK3B through the PI3K-Akt signaling pathway, thereby upregulating the Wnt/beta-catenin signaling pathway and promoting the proliferation of NSCs. Improves ischemic stroke recovery while inhibiting neuroinflammation through small extracellular vesicles (sEVs)-mediated mechanism. Enhances the secretion of sEVs from NSCs, which in turn inhibit both the MAPK and NF-kappaB pathways in microglia. This inhibition suppresses the pro-inflammatory M1 polarization of microglia, promoting a shift towards the M2 anti-inflammatory phenotype, which is beneficial for reducing neuroinflammation. The chain is Protein strawberry notch homolog 1 (Sbno1) from Rattus norvegicus (Rat).